A 481-amino-acid chain; its full sequence is Glutamyl-tRNA(Gln) amidotransferase subunit A (481 aa).

Active-site charge relay system residues include lysine 76 and serine 151. Serine 175 acts as the Acyl-ester intermediate in catalysis.

It belongs to the amidase family. GatA subfamily. As to quaternary structure, heterotrimer of A, B and C subunits.

The catalysed reaction is L-glutamyl-tRNA(Gln) + L-glutamine + ATP + H2O = L-glutaminyl-tRNA(Gln) + L-glutamate + ADP + phosphate + H(+). Allows the formation of correctly charged Gln-tRNA(Gln) through the transamidation of misacylated Glu-tRNA(Gln) in organisms which lack glutaminyl-tRNA synthetase. The reaction takes place in the presence of glutamine and ATP through an activated gamma-phospho-Glu-tRNA(Gln). The polypeptide is Glutamyl-tRNA(Gln) amidotransferase subunit A (Neisseria gonorrhoeae (strain NCCP11945)).